A 354-amino-acid polypeptide reads, in one-letter code: Transcription activator of gluconeogenesis ERT1-1 (354 aa).

The tract at residues 1 to 29 is disordered; sequence MSFYPILRGPAKQESPPPPPAPKKRRKTA. Residues 32–60 constitute a DNA-binding region (zn(2)-C6 fungal-type); it reads CLHCQKAHLTCDEGRPCARCIKKNMGDQC. 2 disordered regions span residues 71–111 and 128–169; these read LVGL…FGSS and DTSS…QGSP. Residues 81–98 show a composition bias toward low complexity; the sequence is QATQQKQQQQQQQQQAVQ. The segment covering 159–169 has biased composition (polar residues); the sequence is SQTAGTPQGSP.

This sequence belongs to the ERT1/acuK family.

Its subcellular location is the nucleus. Transcription factor which regulates nonfermentable carbon utilization. Activator of gluconeogenetic genes. This is Transcription activator of gluconeogenesis ERT1-1 (ERT1-1) from Yarrowia lipolytica (strain CLIB 122 / E 150) (Yeast).